The primary structure comprises 788 residues: Bifunctional purine biosynthetic protein ADE1 (788 aa).

The interval 1 to 430 (MEPIIALLIG…DIAHHALNPK (430 aa)) is GARS. The ATP-grasp domain occupies 115-321 (KDFMHRNNIP…LAEIILACVN (207 aa)). An ATP-binding site is contributed by 141–202 (LDTCTFDVVI…EELLEGEELS (62 aa)). The Mg(2+) site is built by Glu291 and Asn293. The interval 437 to 769 (LTYENSGVSV…TVYRIGQLVD (333 aa)) is AIRS.

In the N-terminal section; belongs to the GARS family. The protein in the C-terminal section; belongs to the AIR synthase family. Mg(2+) serves as cofactor. Requires Mn(2+) as cofactor.

It localises to the cytoplasm. The protein localises to the cytosol. It carries out the reaction 5-phospho-beta-D-ribosylamine + glycine + ATP = N(1)-(5-phospho-beta-D-ribosyl)glycinamide + ADP + phosphate + H(+). The catalysed reaction is 2-formamido-N(1)-(5-O-phospho-beta-D-ribosyl)acetamidine + ATP = 5-amino-1-(5-phospho-beta-D-ribosyl)imidazole + ADP + phosphate + H(+). It functions in the pathway purine metabolism; IMP biosynthesis via de novo pathway; 5-amino-1-(5-phospho-D-ribosyl)imidazole from N(2)-formyl-N(1)-(5-phospho-D-ribosyl)glycinamide: step 2/2. The protein operates within purine metabolism; IMP biosynthesis via de novo pathway; N(1)-(5-phospho-D-ribosyl)glycinamide from 5-phospho-alpha-D-ribose 1-diphosphate: step 2/2. Its function is as follows. Catalyzes the second and fifth step in the 'de novo' purine biosynthesis pathway; contains phosphoribosylamine--glycine ligase (GARS) and phosphoribosylformylglycinamidine cyclo-ligase (AIRS) activities. This chain is Bifunctional purine biosynthetic protein ADE1, found in Schizosaccharomyces pombe (strain 972 / ATCC 24843) (Fission yeast).